The primary structure comprises 281 residues: MPELPPLRDVIAKHGLSASKALGQNFLFDAQLLDRIAGIPGGLENRAVLEIGPGPGGLTRALLKAGARVTAIEMDRRCLPALAELSEVYPGKLSVIHGDAMKLDHAELMGEPFAVVANLPYNVGTALFVRWLGGETWPPQWTSLTLMFQQEVAQRIVSTPGTSAYGRLAVLAQWRSAASMPMKVHRSAFTPPPKVMSAIVHVTPDEMPEGVSARTLERLTEAAFGQRRKMLRQSLKGVPGAVETLAEVAIEETRRAETVTVEEFVALARRLGASRPSSNSG.

6 residues coordinate S-adenosyl-L-methionine: asparagine 25, leucine 27, glycine 52, glutamate 73, aspartate 99, and asparagine 118.

Belongs to the class I-like SAM-binding methyltransferase superfamily. rRNA adenine N(6)-methyltransferase family. RsmA subfamily.

The protein resides in the cytoplasm. The catalysed reaction is adenosine(1518)/adenosine(1519) in 16S rRNA + 4 S-adenosyl-L-methionine = N(6)-dimethyladenosine(1518)/N(6)-dimethyladenosine(1519) in 16S rRNA + 4 S-adenosyl-L-homocysteine + 4 H(+). Specifically dimethylates two adjacent adenosines (A1518 and A1519) in the loop of a conserved hairpin near the 3'-end of 16S rRNA in the 30S particle. May play a critical role in biogenesis of 30S subunits. This Erythrobacter litoralis (strain HTCC2594) protein is Ribosomal RNA small subunit methyltransferase A.